Reading from the N-terminus, the 362-residue chain is MTTLMGSYSWTESLDCSPMDGDLSDGLSPHRSPREKGSETRIRRPMNAFMVWAKDERKRLAVQNPDLHNAELSKMLGKSWKALSPAQKRPYVEEAERLRVQHMQDYPNYKYRPRRKKQIKRICKRVDTGFLLGSLSKDQNSVPDTRGCRTAMEKEENGGYPGAALSDIRHYRETPSNGNKYDQTYPYGLPTPPEMSPLEAIDQDQSFYSTSCSEDCHSHINGAVYPPEYSRSPILCSHLSQVPIPQPGSSMIPPVPTCPPAYYSSSYHSIHNYHAHLGQLSPPPEHPHYDTIDQISQAELLGEMDRNEFDQYLNTSLQDPTEMTIHGHVQVSQASDIQPSETSLISVLADATATYYNSYSVS.

Positions 19–41 are disordered; sequence MDGDLSDGLSPHRSPREKGSETR. The span at 32 to 41 shows a compositional bias: basic and acidic residues; that stretch reads SPREKGSETR. Residues 42–110 constitute a DNA-binding region (HMG box); it reads IRRPMNAFMV…QHMQDYPNYK (69 aa). In terms of domain architecture, Sox C-terminal spans 246–362; the sequence is QPGSSMIPPV…ATYYNSYSVS (117 aa).

In terms of tissue distribution, localized to the vegetal hemisphere of blastula embryos. Tissue-specific expression in early neurula (stage 13-14) embryos begins in the ciliate cells of the epidermis. Starting about stage 24, expression is found in a lateral stripe on each side of the embryo, with expression extending more posteriorly as development proceeds. Expressed in embryonic vasculature, as well as in the procardia tube, endocardium, notochord and hindbrain. As development proceeds, strong expression is seen in the hindbrain, posterior cardinal veins, aortic arch, stomodeal depression, epithelium and intersomitic arteries of stage 33/34 larvae. Expressed in posterior rhombomeres. By stage 40 larvae, expression in most of the vascular endothelia disappears, in particular in the posterior cardinal vein, but expression continues in the hindbrain. Expressed in a wide range of adult tissues, including ovary, testis, kidney, bladder, duodenum and liver.

Its subcellular location is the nucleus. In terms of biological role, transcription factor. Binds to the DNA sequence 5'-AACAAT-3'. Acts downstream of vegt and upstream of nodal signaling to promote endodermal and mesodermal differentiation by promoting vegt-induced expression of both endodermal genes (including endodermin) and mesodermal genes (including snai1/snail and snai2/slug). Induces expression of multiple nodal genes (including nodal, nodal2, nodal4, nodal5 and nodal6) and binds directly to sites within the promoter of the nodal5 gene. The endodermal and mesodermal specification pathways then interact to initiate cardiogenesis. Acts partially redundantly with sox18 during cardiogenesis. Also acts as an antagonist of beta-catenin signaling. Regulates (possibly indirectly) development of the pronephros, the functional larval kidney. This is Transcription factor Sox-7 (sox7) from Xenopus laevis (African clawed frog).